Consider the following 129-residue polypeptide: Small ribosomal subunit protein bS6 (129 aa).

This sequence belongs to the bacterial ribosomal protein bS6 family.

Binds together with bS18 to 16S ribosomal RNA. This is Small ribosomal subunit protein bS6 from Microcystis aeruginosa (strain NIES-843 / IAM M-2473).